The primary structure comprises 584 residues: MGIHIPYLTSKTSQSNVGDAVGNADSVEFNSEHDSPSKRGKITLESHEIQRAPASDDEDRIQIKPVNDEDDTSVMITFNQSLSPFIITLTFVASISGFMFGYDTGYISSALISIGTDLDHKVLTYGEKEIVTAATSLGALITSIFAGTAADIFGRKRCLMGSNLMFVIGAILQVSAHTFWQMAVGRLIMGFGVGIGSLIAPLFISEIAPKMIRGRLTVINSLWLTGGQLVAYGCGAGLNYVNNGWRILVGLSLIPTAVQFTCLCFLPDTPRYYVMKGDLARATEVLKRSYTDTSEEIIERKVEELVTLNQSIPGKNVPEKVWNTIKELHTVPSNLRALIIGCGLQAIQQFTGWNSLMYFSGTIFETVGFKNSSAVSIIVSGTNFIFTLVAFFSIDKIGRRTILLIGLPGMTMALVVCSIAFHFLGIKFDGAVAVVVSSGFSSWGIVIIVFIIVFAAFYALGIGTVPWQQSELFPQNVRGIGTSYATATNWAGSLVIASTFLTMLQNITPAGTFAFFAGLSCLSTIFCYFCYPELSGLELEEVQTILKDGFNIKASKALAKKRKQQVARVHELKYEPTQEIIEDI.

The Cytoplasmic portion of the chain corresponds to 1–81; the sequence is MGIHIPYLTS…TSVMITFNQS (81 aa). At threonine 12 the chain carries Phosphothreonine. The disordered stretch occupies residues 13–42; sequence SQSNVGDAVGNADSVEFNSEHDSPSKRGKI. Serine 26, serine 31, serine 35, serine 37, and serine 46 each carry phosphoserine. The segment covering 30–42 has biased composition (basic and acidic residues); sequence NSEHDSPSKRGKI. Residues 82–102 form a helical membrane-spanning segment; that stretch reads LSPFIITLTFVASISGFMFGY. At 103–129 the chain is on the extracellular side; the sequence is DTGYISSALISIGTDLDHKVLTYGEKE. Residues 130–150 form a helical membrane-spanning segment; it reads IVTAATSLGALITSIFAGTAA. Residues 151–163 lie on the Cytoplasmic side of the membrane; the sequence is DIFGRKRCLMGSN. The chain crosses the membrane as a helical span at residues 164 to 184; that stretch reads LMFVIGAILQVSAHTFWQMAV. The Extracellular segment spans residues 185–186; sequence GR. A helical membrane pass occupies residues 187-207; that stretch reads LIMGFGVGIGSLIAPLFISEI. At 208–215 the chain is on the cytoplasmic side; that stretch reads APKMIRGR. The helical transmembrane segment at 216–236 threads the bilayer; that stretch reads LTVINSLWLTGGQLVAYGCGA. Over 237–246 the chain is Extracellular; the sequence is GLNYVNNGWR. A helical transmembrane segment spans residues 247–267; it reads ILVGLSLIPTAVQFTCLCFLP. The Cytoplasmic segment spans residues 268–349; sequence DTPRYYVMKG…IGCGLQAIQQ (82 aa). A helical membrane pass occupies residues 350–370; it reads FTGWNSLMYFSGTIFETVGFK. Asparagine 371 carries an N-linked (GlcNAc...) asparagine glycan. Over 371 to 376 the chain is Extracellular; it reads NSSAVS. Residues 377–397 form a helical membrane-spanning segment; sequence IIVSGTNFIFTLVAFFSIDKI. At 398 to 400 the chain is on the cytoplasmic side; it reads GRR. A helical membrane pass occupies residues 401 to 421; it reads TILLIGLPGMTMALVVCSIAF. The Extracellular portion of the chain corresponds to 422–441; that stretch reads HFLGIKFDGAVAVVVSSGFS. The chain crosses the membrane as a helical span at residues 442 to 462; sequence SWGIVIIVFIIVFAAFYALGI. The Cytoplasmic portion of the chain corresponds to 463–486; it reads GTVPWQQSELFPQNVRGIGTSYAT. Residues 487–507 form a helical membrane-spanning segment; sequence ATNWAGSLVIASTFLTMLQNI. At 508–510 the chain is on the extracellular side; sequence TPA. The chain crosses the membrane as a helical span at residues 511–531; sequence GTFAFFAGLSCLSTIFCYFCY. Residues 532-584 lie on the Cytoplasmic side of the membrane; it reads PELSGLELEEVQTILKDGFNIKASKALAKKRKQQVARVHELKYEPTQEIIEDI. Residue lysine 573 forms a Glycyl lysine isopeptide (Lys-Gly) (interchain with G-Cter in ubiquitin) linkage.

Belongs to the major facilitator superfamily. Sugar transporter (TC 2.A.1.1) family.

It localises to the cell membrane. It catalyses the reaction myo-inositol(out) + H(+)(out) = myo-inositol(in) + H(+)(in). Its function is as follows. Major transporter for myo-inositol. The protein is Myo-inositol transporter 1 (ITR1) of Saccharomyces cerevisiae (strain ATCC 204508 / S288c) (Baker's yeast).